The chain runs to 95 residues: Small ribosomal subunit protein uS19 (95 aa).

The segment at 76 to 95 is disordered; sequence PTRRFGGHADKKAKKGELKK. Residues 82 to 95 are compositionally biased toward basic and acidic residues; it reads GHADKKAKKGELKK.

This sequence belongs to the universal ribosomal protein uS19 family.

Protein S19 forms a complex with S13 that binds strongly to the 16S ribosomal RNA. The chain is Small ribosomal subunit protein uS19 (rpsS) from Thermotoga maritima (strain ATCC 43589 / DSM 3109 / JCM 10099 / NBRC 100826 / MSB8).